Consider the following 200-residue polypeptide: dTTP/UTP pyrophosphatase (200 aa).

Residue aspartate 81 is the Proton acceptor of the active site.

The protein belongs to the Maf family. YhdE subfamily. A divalent metal cation serves as cofactor.

It localises to the cytoplasm. It catalyses the reaction dTTP + H2O = dTMP + diphosphate + H(+). The enzyme catalyses UTP + H2O = UMP + diphosphate + H(+). Functionally, nucleoside triphosphate pyrophosphatase that hydrolyzes dTTP and UTP. May have a dual role in cell division arrest and in preventing the incorporation of modified nucleotides into cellular nucleic acids. The protein is dTTP/UTP pyrophosphatase of Cupriavidus metallidurans (strain ATCC 43123 / DSM 2839 / NBRC 102507 / CH34) (Ralstonia metallidurans).